A 124-amino-acid polypeptide reads, in one-letter code: Quinol oxidase subunit 4 (124 aa).

The next 3 membrane-spanning stretches (helical) occupy residues 16–36 (IVGF…AVYT), 44–64 (LWII…MFMH), and 78–98 (TLFG…IFAA).

It belongs to the cytochrome c oxidase bacterial subunit 4 family.

It localises to the cell membrane. It carries out the reaction 2 a quinol + O2 = 2 a quinone + 2 H2O. Functionally, catalyzes quinol oxidation with the concomitant reduction of oxygen to water. Major component for energy conversion during vegetative growth. The sequence is that of Quinol oxidase subunit 4 (qoxD) from Bacillus subtilis (strain 168).